The sequence spans 277 residues: MKITAEMIKELRQQTHAGMIACKQALEKTEGNLQKAIVFLREKGIVKASQKQDRTTSEGLINIVFSQNDAFLYELNSETDFVAKNEHFQQLMKTIGEVILQNKLQSVDEVLTFNYQNKTIQDLLLEKTSILGEKITLKRILKVTKKEEEIFGTYKHQGGRISVLVVLENNHPSIAEDIAMHIAAFNPKFLNPDKVNLQFLTTEKNILQKQTEKQLLEEKKPLHILDKIVQNRLNKLLKEICLSEQPFVKNNEQKVKDYLQNNNTNVVSYFRWSIANQ.

Residues 79–82 (TDFV) are involved in Mg(2+) ion dislocation from EF-Tu.

Belongs to the EF-Ts family.

The protein resides in the cytoplasm. Functionally, associates with the EF-Tu.GDP complex and induces the exchange of GDP to GTP. It remains bound to the aminoacyl-tRNA.EF-Tu.GTP complex up to the GTP hydrolysis stage on the ribosome. The sequence is that of Elongation factor Ts from Phytoplasma australiense.